A 233-amino-acid polypeptide reads, in one-letter code: Small ribosomal subunit protein uS2 (233 aa).

It belongs to the universal ribosomal protein uS2 family.

This is Small ribosomal subunit protein uS2 from Clostridium botulinum (strain Hall / ATCC 3502 / NCTC 13319 / Type A).